The primary structure comprises 499 residues: Glucooligosaccharide oxidase (499 aa).

The first 25 residues, methionine 1–arginine 25, serve as a signal peptide directing secretion. Residues cysteine 31 and cysteine 80 are joined by a disulfide bond. Positions valine 58–alanine 230 constitute an FAD-binding PCMH-type domain. Residues histidine 95 to cysteine 155 constitute a cross-link (6-(S-cysteinyl)-8alpha-(pros-histidyl)-FAD (His-Cys)). Substrate-binding residues include tyrosine 97, threonine 154, and arginine 270. Asparagine 330 and asparagine 366 each carry an N-linked (GlcNAc...) asparagine glycan. Substrate is bound by residues glutamine 378 and glutamine 409. Asparagine 419 carries an N-linked (GlcNAc...) asparagine glycan. Tyrosine 454 contacts substrate. The active-site Proton acceptor is tyrosine 454.

The protein belongs to the oxygen-dependent FAD-linked oxidoreductase family. It depends on FAD as a cofactor. In terms of processing, the FAD cofactor is bound via a bicovalent 6-S-cysteinyl, 8alpha-N1-histidyl FAD linkage.

The protein localises to the secreted. The enzyme catalyses beta-lactose + O2 = lactobiono-1,5-lactone + H2O2. It carries out the reaction D-cellobiose + O2 = D-cellobiono-1,5-lactone + H2O2. It catalyses the reaction D-cellotriose + O2 = D-cellotriono-1,5-lactone + H2O2. The catalysed reaction is D-cellotetraose + O2 = D-cellotetraono-1,5-lactone + H2O2. The enzyme catalyses D-cellopentaose + O2 = D-cellopentaono-1,5-lactone + H2O2. It carries out the reaction D-cellohexaose + O2 = D-cellohexaono-1,5-lactone + H2O2. Its function is as follows. Catalyzes the selective oxidation of C1 hydroxyl moieties on mono- and disaccharides with concomitant reduction of molecular oxygen to hydrogen peroxide. This results in the formation of the corresponding lactones, which typically undergo spontaneous hydrolysis. Glucooligosaccharide oxidase is able to oxidize the monosaccharide D-glucose as well as the disaccharides maltose, cellobiose, and lactose. In addition, it shows high selectivity for cello- and maltooligosaccharides, indicating that glucooligosaccharide oxidase prefers oligosaccharides with a beta-D-glucosyl unit on the reducing end and additional sugar units linked by alpha- or beta-1,4 glucosidic bonds. This is Glucooligosaccharide oxidase (gluO) from Sarocladium strictum (Black bundle disease fungus).